Consider the following 918-residue polypeptide: Band 3 anion exchange protein (918 aa).

A disordered region spans residues 1 to 48; it reads MENDLSFGEDVMSYEEESDSAFPSPIRPTPPGHSGNYDLEQSRQEEDS. Residues 1–392 are Cytoplasmic-facing; that stretch reads MENDLSFGED…ISDFTDALDP (392 aa). Residues 393-416 traverse the membrane as a helical segment; sequence QVLAAVIFIYFAALSPAITFGGLL. Residues 417–424 lie on the Extracellular side of the membrane; the sequence is ADKTEHMM. Residues 425-445 traverse the membrane as a helical segment; sequence GVSELMISTCVQGIIFAFIAA. Over 446–448 the chain is Cytoplasmic; sequence QPT. A discontinuously helical transmembrane segment spans residues 449 to 465; the sequence is LVIGFSGPLLVFEEAFF. Residues 466-474 are Extracellular-facing; that stretch reads AFCKSQEIE. The helical transmembrane segment at 475–495 threads the bilayer; that stretch reads YIVGRIWVGLWLVIIVVVIVA. Topologically, residues 496–507 are cytoplasmic; it reads VEGSFLVKFISR. A helical membrane pass occupies residues 508-530; sequence FTQEIFSILISLIFIYETFSKLG. Residues 531 to 583 lie on the Extracellular side of the membrane; the sequence is KIFKAHPLVLNYEHLNDSLDNPFHPVVKEHIEYHEDGNKTVHEVIHERAYPNT. Residues Asn-546 and Asn-568 are each glycosylated (N-linked (GlcNAc...) asparagine). A helical membrane pass occupies residues 584–604; the sequence is ALLSMCLMFGCFFIAYFLRQF. Over 605-615 the chain is Cytoplasmic; it reads KNGHFLPGPIR. Residues 616 to 636 traverse the membrane as a helical segment; the sequence is RMIGDFGVPIAIFFMIAVDIT. The Extracellular portion of the chain corresponds to 637–676; the sequence is IEDAYTQKLVVPKGLMVSNPNARGWFINPLGEKKPFPAWM. The chain crosses the membrane as a helical span at residues 677 to 697; it reads MGACCVPALLVFILIFLESQI. Residues 698–713 lie on the Cytoplasmic side of the membrane; sequence TTLIVSKPERKMVKGS. A helical membrane pass occupies residues 714 to 732; sequence GFHLDLLILVTMGGIASLF. A discontinuously helical transmembrane segment spans residues 733–750; sequence GVPWLSAATVRSVTHANA. Over 751–769 the chain is Cytoplasmic; that stretch reads LTVMSKGPKPEIEKVLEQR. Transmembrane regions (helical) follow at residues 770-790 and 791-809; these read ISGM…PILK and MIPM…ITSL. Residues 810-847 are Cytoplasmic-facing; that stretch reads SGIQMWDRMLLLIVPRKYYPADAYAQRVTTMKMHLFTL. The segment at residues 848–878 is an intramembrane region (discontinuously helical); sequence IQMVCLGALWMVKMSAFSLALPFVLILTIPL. A lipid anchor (S-palmitoyl cysteine) is attached at Cys-852. The Cytoplasmic segment spans residues 879–918; it reads RMAITGTLFTDKEMKCLDASDGKVKFEEEPGEDMYESPLP.

It belongs to the anion exchanger (TC 2.A.31) family. A dimer in solution, it spans the membrane asymmetrically and appears to be tetrameric.

It is found in the cell membrane. The catalysed reaction is hydrogencarbonate(in) + chloride(out) = hydrogencarbonate(out) + chloride(in). In terms of biological role, functions both as a transporter that mediates electroneutral anion exchange across the cell membrane and as a structural protein. Major integral membrane glycoprotein of the erythrocyte membrane; required for normal flexibility and stability of the erythrocyte membrane and for normal erythrocyte shape via the interactions of its cytoplasmic domain with cytoskeletal proteins, glycolytic enzymes, and hemoglobin. Functions as a transporter that mediates the 1:1 exchange of inorganic anions across the erythrocyte membrane. Mediates chloride-bicarbonate exchange in the kidney, and is required for normal acidification of the urine. This is Band 3 anion exchange protein (slc4a1) from Oncorhynchus mykiss (Rainbow trout).